The chain runs to 451 residues: D-inositol 3-phosphate glycosyltransferase (451 aa).

Residue His21 participates in 1D-myo-inositol 3-phosphate binding. UDP-N-acetyl-alpha-D-glucosamine is bound by residues 27-28 (QP) and Gly35. Residues 32-37 (DAGGMN), Lys90, Tyr123, Thr147, and Arg167 contribute to the 1D-myo-inositol 3-phosphate site. Arg241, Lys246, and Gln305 together coordinate UDP-N-acetyl-alpha-D-glucosamine. The Mg(2+) site is built by Tyr314, Arg315, and Ala317. UDP-N-acetyl-alpha-D-glucosamine-binding residues include Glu327 and Glu335. Residue Thr341 participates in Mg(2+) binding.

The protein belongs to the glycosyltransferase group 1 family. MshA subfamily. Homodimer.

The catalysed reaction is 1D-myo-inositol 3-phosphate + UDP-N-acetyl-alpha-D-glucosamine = 1D-myo-inositol 2-acetamido-2-deoxy-alpha-D-glucopyranoside 3-phosphate + UDP + H(+). Its function is as follows. Catalyzes the transfer of a N-acetyl-glucosamine moiety to 1D-myo-inositol 3-phosphate to produce 1D-myo-inositol 2-acetamido-2-deoxy-glucopyranoside 3-phosphate in the mycothiol biosynthesis pathway. The polypeptide is D-inositol 3-phosphate glycosyltransferase (Nocardia farcinica (strain IFM 10152)).